The following is a 176-amino-acid chain: ATP synthase subunit b (176 aa).

Residues 18 to 38 (FGLDATVWVSIAMLVFLGILV) traverse the membrane as a helical segment.

The protein belongs to the ATPase B chain family. As to quaternary structure, F-type ATPases have 2 components, F(1) - the catalytic core - and F(0) - the membrane proton channel. F(1) has five subunits: alpha(3), beta(3), gamma(1), delta(1), epsilon(1). F(0) has three main subunits: a(1), b(2) and c(10-14). The alpha and beta chains form an alternating ring which encloses part of the gamma chain. F(1) is attached to F(0) by a central stalk formed by the gamma and epsilon chains, while a peripheral stalk is formed by the delta and b chains.

It localises to the cell inner membrane. Functionally, f(1)F(0) ATP synthase produces ATP from ADP in the presence of a proton or sodium gradient. F-type ATPases consist of two structural domains, F(1) containing the extramembraneous catalytic core and F(0) containing the membrane proton channel, linked together by a central stalk and a peripheral stalk. During catalysis, ATP synthesis in the catalytic domain of F(1) is coupled via a rotary mechanism of the central stalk subunits to proton translocation. Component of the F(0) channel, it forms part of the peripheral stalk, linking F(1) to F(0). This is ATP synthase subunit b from Sphingopyxis alaskensis (strain DSM 13593 / LMG 18877 / RB2256) (Sphingomonas alaskensis).